We begin with the raw amino-acid sequence, 136 residues long: Large ribosomal subunit protein bL21 (136 aa).

The protein belongs to the bacterial ribosomal protein bL21 family. Part of the 50S ribosomal subunit. Contacts protein L20.

This protein binds to 23S rRNA in the presence of protein L20. The polypeptide is Large ribosomal subunit protein bL21 (Trichodesmium erythraeum (strain IMS101)).